Consider the following 452-residue polypeptide: Glutamyl-tRNA(Gln) amidotransferase subunit A (452 aa).

Catalysis depends on charge relay system residues lysine 56 and serine 131. Serine 155 (acyl-ester intermediate) is an active-site residue.

It belongs to the amidase family. GatA subfamily. As to quaternary structure, heterotrimer of A, B and C subunits.

It carries out the reaction L-glutamyl-tRNA(Gln) + L-glutamine + ATP + H2O = L-glutaminyl-tRNA(Gln) + L-glutamate + ADP + phosphate + H(+). Allows the formation of correctly charged Gln-tRNA(Gln) through the transamidation of misacylated Glu-tRNA(Gln) in organisms which lack glutaminyl-tRNA synthetase. The reaction takes place in the presence of glutamine and ATP through an activated gamma-phospho-Glu-tRNA(Gln). This is Glutamyl-tRNA(Gln) amidotransferase subunit A from Campylobacter curvus (strain 525.92).